The chain runs to 99 residues: Transcription and mRNA export factor SUS1 (99 aa).

This sequence belongs to the ENY2 family. In terms of assembly, component of the nuclear pore complex (NPC)-associated TREX-2 complex (transcription and export complex 2), composed of at least SUS1, SAC3, THP1, SEM1, and CDC31. TREX-2 contains 2 SUS1 chains. The TREX-2 complex interacts with the nucleoporin NUP1. Component of the 1.8 MDa SAGA transcription coactivator-HAT complex. SAGA is built of 5 distinct domains with specialized functions. Within the SAGA complex, SUS1, SGF11, SGF73 and UBP8 form an additional subcomplex of SAGA called the DUB module (deubiquitination module). Interacts directly with THP1, SAC3, SGF11, and with the RNA polymerase II.

The protein localises to the nucleus. It localises to the nucleoplasm. The protein resides in the cytoplasm. It is found in the P-body. Functionally, involved in mRNA export coupled transcription activation by association with both the TREX-2 and the SAGA complexes. At the promoters, SAGA is required for recruitment of the basal transcription machinery. It influences RNA polymerase II transcriptional activity through different activities such as TBP interaction and promoter selectivity, interaction with transcription activators, and chromatin modification through histone acetylation and deubiquitination. Within the SAGA complex, participates in a subcomplex required for deubiquitination of H2B and for the maintenance of steady-state H3 methylation levels. The TREX-2 complex functions in docking export-competent ribonucleoprotein particles (mRNPs) to the nuclear entrance of the nuclear pore complex (nuclear basket). TREX-2 participates in mRNA export and accurate chromatin positioning in the nucleus by tethering genes to the nuclear periphery. May also be involved in cytoplasmic mRNA decay by interaction with components of P-bodies. The polypeptide is Transcription and mRNA export factor SUS1 (Eremothecium gossypii (strain ATCC 10895 / CBS 109.51 / FGSC 9923 / NRRL Y-1056) (Yeast)).